A 140-amino-acid polypeptide reads, in one-letter code: Nucleoside diphosphate kinase (140 aa).

Residues lysine 11, phenylalanine 59, arginine 87, threonine 93, arginine 104, and asparagine 114 each coordinate ATP. Residue histidine 117 is the Pros-phosphohistidine intermediate of the active site.

This sequence belongs to the NDK family. Homotetramer. Mg(2+) serves as cofactor.

The protein localises to the cytoplasm. It catalyses the reaction a 2'-deoxyribonucleoside 5'-diphosphate + ATP = a 2'-deoxyribonucleoside 5'-triphosphate + ADP. It carries out the reaction a ribonucleoside 5'-diphosphate + ATP = a ribonucleoside 5'-triphosphate + ADP. Functionally, major role in the synthesis of nucleoside triphosphates other than ATP. The ATP gamma phosphate is transferred to the NDP beta phosphate via a ping-pong mechanism, using a phosphorylated active-site intermediate. This chain is Nucleoside diphosphate kinase, found in Dinoroseobacter shibae (strain DSM 16493 / NCIMB 14021 / DFL 12).